Here is a 1030-residue protein sequence, read N- to C-terminus: MTIAEIRKFAQTTQKFVEAENLFEHGNVVLPKKYLNKARGMAEVLYNSQVIKVSFTAKDGELTCKCSCLANVDNCVHIVAVLLKYHQMLVESKRSFNLAEAFHLDCDQAEMLIENLSLEIIAGGWNFKLGFTINLDKHNPQPSVLRFYCCDATFVYFLHLENDTLHSVELSKFKPEERATLLFFDKLCKQFTVGYDRNSLLFPLAGFLKELQANTEPTIFVFNDDKIDNILFLRISKKHHGLNHVCGFSGKKVFDFVTYKQKEKQIVLRSAYLSKFTDFKFPYTINIYKLQFGEPLFFYFLIQLKRDGFKNFYFQSEDSIVKEKEYLPKLYFKVEYDPVKNKFVSDAFFKYKNHFNKGTTTVYPHRYYMAKKSDRGGFNRLLFYEEAVENFYQDQFDLGYFRKFEHLPIQDKNQIEAFKAALDDLMPVDLAEVSLSDNLLHQKPLHFALSDLEAVAVDDKQIKLSFAPSAVELKLIKRILSAYHKGNVVCIDQESWYDLKQPAAKELIQFWNQFDLRNATSDGNHIYLPKYYLFEVAKIFSQYLDIKNLFDVPTIKKIEDQNNNVFDLSLEHKKITSLRNYQQEGVKWIRGLEENKFGGILADEMGLGKTVQVIFALLDSYLKNHVNLPSLIIVPASLLLNWKSEFEKFAPQIKVKVANIPSKERGELYEKLTNEILIVSFNVLRSDVKLITKQRFHYVVIDEAQGIKNDSSSITKAAKKVKGNFCLALTGTPIENRLLDLWSCFDFVLPSFLGNKKQFTDQFEKEKTDQSFHLLMQRTSPFILRRTKSKVLKELPNKITTDIYVELNPMHQKLYEEERDRGLEEIKQIQDKSSFNILTLILKLRHLCSLPKNSQGILENSAKKEAALEIIHEAIENQRKIILFTQFIDVIDHFKDTFKEQGIEYFIFDGRKSPKSRHSIIEKFNNAKNPCVLLASLKAGGVGINLTAAEVVIHFDVWWNTAVENQATDRAHRIGQKKTVQVYRIIAKNTIEERVCQVQAEKQELVSKTLVEDVNFFESLTNEELLRLFE.

The segment at 51–86 adopts an SWIM-type zinc-finger fold; the sequence is IKVSFTAKDGELTCKCSCLANVDNCVHIVAVLLKYH. The Helicase ATP-binding domain maps to 590 to 751; sequence RGLEENKFGG…WSCFDFVLPS (162 aa). 603 to 610 serves as a coordination point for ATP; that stretch reads DEMGLGKT. The DEAQ box motif lies at 702–705; that stretch reads DEAQ. The Helicase C-terminal domain maps to 867–1021; the sequence is ALEIIHEAIE…EDVNFFESLT (155 aa).

Belongs to the SNF2/RAD54 helicase family.

This is an uncharacterized protein from Mycoplasma pneumoniae (strain ATCC 29342 / M129 / Subtype 1) (Mycoplasmoides pneumoniae).